Here is a 200-residue protein sequence, read N- to C-terminus: BREX protein BrxB (200 aa).

The protein belongs to the BrxB family.

BREX systems (bacteriophage exclusion) provide immunity against bacteriophage. Part of a type 1 BREX system which protects against dsDNA phage. This system allows phage adsorption but prevents phage DNA replication, without degradation of the phage DNA. Methylation of bacterial DNA by PglX guides self/non-self discrimination. When the brxA-brxB-brxC-pglX-pglZ-brxL genes are transformed into a susceptible E.coli strain (BW25113) they confer very high resistance to infection by bacteriophage VR7 and VpaE1, about 100-fold protection against lambda, T5 and T7 and no protection against RNA phage Qbeta, ssDNA phage M13 or dSDNA phage T4 and VR5. Glycosylated phage DNA is not susceptible to BREX. The BREX system does not confer resistance to lysogenic lambda phage, i.e. prophage that are integrated into the chromosomal DNA and then induced to form phage. This Escherichia coli O9:H4 (strain HS) protein is BREX protein BrxB.